Reading from the N-terminus, the 428-residue chain is MEIKQIKAREVIDSRGNPTVEADVILNDDTIGSAMVPSGASTGQKEALELRDRDKSRYLGKGVLKAVKFVNTEICDTLIGFDINNLSKIDQTMIDLDGTKTKSRLGANTILSVSLAAAHANANRQHKPLYASLNQGGNYKLPVPMMNIINGGEHANNNIDIQEFMIIPVGAPSFKEALRYGIEVFHHLKSILEIKGMSTTVGDEGGFAPNLASNEDAIKIILEAINNAGYKPGKDIFIGIDAASSEFYDNDNKTYNLISENKSFSSEEFVNYLAKWVENYPIISIEDGMDENDWNGWNLLTKKLGDKVQLVGDDLYVTNSKILKQGIERNIANSILIKVNQIGTLTETFATIKVAMNARYTSIMSHRSGETEDTTIADLAVACTCSQIKTGSLSRSDRLAKYNRLLRIEEELGTQAVYPGLNAFNHLN.

Glutamine 162 contacts (2R)-2-phosphoglycerate. Glutamate 204 (proton donor) is an active-site residue. Mg(2+) contacts are provided by aspartate 241, glutamate 286, and aspartate 313. Positions 338, 367, 368, and 389 each coordinate (2R)-2-phosphoglycerate. Lysine 338 (proton acceptor) is an active-site residue.

The protein belongs to the enolase family. In terms of assembly, component of the RNA degradosome, a multiprotein complex involved in RNA processing and mRNA degradation. The cofactor is Mg(2+).

It is found in the cytoplasm. It localises to the secreted. The protein resides in the cell surface. It carries out the reaction (2R)-2-phosphoglycerate = phosphoenolpyruvate + H2O. It participates in carbohydrate degradation; glycolysis; pyruvate from D-glyceraldehyde 3-phosphate: step 4/5. In terms of biological role, catalyzes the reversible conversion of 2-phosphoglycerate (2-PG) into phosphoenolpyruvate (PEP). It is essential for the degradation of carbohydrates via glycolysis. In Vesicomyosocius okutanii subsp. Calyptogena okutanii (strain HA), this protein is Enolase.